We begin with the raw amino-acid sequence, 449 residues long: Chitobiosyldiphosphodolichol beta-mannosyltransferase (449 aa).

At 1 to 7 the chain is on the lumenal side; it reads MFLEIPR. A helical transmembrane segment spans residues 8 to 28; sequence WLLALIILYLSIPLVVYYVIP. The Dolichol recognition signature appears at 21-32; sequence LVVYYVIPYLFY. Residues 29–104 are Cytoplasmic-facing; it reads YLFYGNKSTK…SNLKRKGGGT (76 aa). Residues 105-125 constitute an intramembrane region (helical); it reads SVIFMVKKVLFQVLSIFKLLW. The Cytoplasmic segment spans residues 126–449; it reads ELRGSDYILV…RTMRDLKLIH (324 aa). Positions 435–449 are required for oligomerization; sequence QSNWERTMRDLKLIH.

Belongs to the glycosyltransferase group 1 family. Glycosyltransferase 33 subfamily. As to quaternary structure, homodimer. ALG1 forms mannosyltransferases (MT) heteromeric complexes with either ALG2 or ALG11.

It localises to the endoplasmic reticulum membrane. It catalyses the reaction an N,N'-diacetylchitobiosyl-diphospho-di-trans,poly-cis-dolichol + GDP-alpha-D-mannose = a beta-D-Man-(1-&gt;4)-beta-D-GlcNAc-(1-&gt;4)-alpha-D-GlcNAc-diphospho-di-trans,poly-cis-dolichol + GDP + H(+). It functions in the pathway protein modification; protein glycosylation. Its function is as follows. Participates in the formation of the lipid-linked precursor oligosaccharide for N-glycosylation. Involved in assembling the dolichol-pyrophosphate-GlcNAc(2)-Man(5) intermediate on the cytoplasmic surface of the ER. The protein is Chitobiosyldiphosphodolichol beta-mannosyltransferase (ALG1) of Saccharomyces cerevisiae (strain ATCC 204508 / S288c) (Baker's yeast).